The following is a 412-amino-acid chain: Yellow-related salivary protein LJM17 (412 aa).

The N-terminal stretch at methionine 1–glycine 18 is a signal peptide. Asparagine 29 carries N-linked (GlcNAc...) asparagine glycosylation.

This sequence belongs to the major royal jelly protein family. As to expression, salivary gland.

Its subcellular location is the secreted. Probably modulates blood feeding of sand flies on vertebrate species by binding and sequestering different mediators involved in the host response. Binds biogenic amines. Binds serotonin with high affinity. Binds noradrenaline but not adrenaline. Binds dopamine and octopamine. Binds histamine. Inhibits host smooth muscle contraction induced by histamine in bioassay with guinea pig ileum. Immunogenic; elicits antibody production in the host. Functions as a chemoattractant for host neutrophils; likely acts through a G-protein-coupled receptor and effect is dependent on calcium influx. The protein is Yellow-related salivary protein LJM17 of Lutzomyia longipalpis (Sand fly).